The chain runs to 918 residues: Protein translocase subunit SecA (918 aa).

Residues Gln-87, 105-109 (GEGKT), and Asp-516 each bind ATP. The Zn(2+) site is built by Cys-902, Cys-904, Cys-913, and His-914.

Belongs to the SecA family. In terms of assembly, monomer and homodimer. Part of the essential Sec protein translocation apparatus which comprises SecA, SecYEG and auxiliary proteins SecDF-YajC and YidC. Zn(2+) serves as cofactor.

It is found in the cell inner membrane. It localises to the cytoplasm. The enzyme catalyses ATP + H2O + cellular proteinSide 1 = ADP + phosphate + cellular proteinSide 2.. In terms of biological role, part of the Sec protein translocase complex. Interacts with the SecYEG preprotein conducting channel. Has a central role in coupling the hydrolysis of ATP to the transfer of proteins into and across the cell membrane, serving both as a receptor for the preprotein-SecB complex and as an ATP-driven molecular motor driving the stepwise translocation of polypeptide chains across the membrane. The polypeptide is Protein translocase subunit SecA (Methylibium petroleiphilum (strain ATCC BAA-1232 / LMG 22953 / PM1)).